We begin with the raw amino-acid sequence, 758 residues long: Long-chain-alcohol oxidase FAO1 (758 aa).

2 consecutive transmembrane segments (helical) span residues 102 to 122 (IVLR…LVCL) and 155 to 175 (PLAR…YFTW). 246–261 (CDAVVVGSGCGGGVAA) contributes to the FAD binding site. Residue histidine 689 is the Proton acceptor of the active site.

It belongs to the GMC oxidoreductase family.

It localises to the membrane. The catalysed reaction is a long-chain primary fatty alcohol + O2 = a long-chain fatty aldehyde + H2O2. Long-chain fatty alcohol oxidase involved in the omega-oxidation pathway of lipid degradation. In Arabidopsis thaliana (Mouse-ear cress), this protein is Long-chain-alcohol oxidase FAO1 (FAO1).